Consider the following 494-residue polypeptide: MSTGTFVVSQPLNYRGGARVEPVDASGTEKAFEPATGRVIATFACSGEKEVNLAVENAKAAFKLWSKKSGLERCQVLLEAARIIKERKDEIATVETINNGKSIFEARLDVDTCWQCLEYYAGLAASMAGEHIQLPGGSFGYTRREPLGVCVGIGAWNYPFQIACWKSAPALACGNAMIFKPSPFTPVSALLLAEIYTKAGAPPGLFNVVQGGAATGQFLCHHREVAKISFTGSVPTGVKIMEMSAKGVKPITLELGGKSPLIIFSDCNMENAVKGALMANFLTQGQVCCNGTRVFVQKEIADKFINEVVKQTQKIKLGDPLLEDTRMGPLINAPHLERVLGFVKLAKEQGATVLCGGEVYVPEDPKLKHGYYMTPCILTNCRDDMTCVKEEIFGPVMSILTFGTEAEVLERANDTTFGLAAGVFTRDIQRAHRVAAELQAGTCYINNYNVSPVELPFGGYKKSGFGRENGRVTIEYYSQLKTVCVEMGDVESAF.

Serine 2 is subject to N-acetylserine. Lysine 30 is subject to N6-acetyllysine; alternate. Position 30 is an N6-succinyllysine; alternate (lysine 30). Lysine 59 carries the N6-succinyllysine modification. NAD(+)-binding positions include lysine 180 and 232–236 (GSVPT). Glutamate 254 (proton acceptor) is an active-site residue. Cysteine 288 (nucleophile) is an active-site residue. Lysine 298 bears the N6-acetyllysine mark. Lysine 303 is modified (N6-acetyllysine; alternate). Lysine 303 bears the N6-succinyllysine; alternate mark. An N6-acetyllysine modification is found at lysine 344. Residue glutamate 391 participates in NAD(+) binding.

This sequence belongs to the aldehyde dehydrogenase family. As to quaternary structure, homotetramer.

Its subcellular location is the cytoplasm. The protein localises to the cytosol. It carries out the reaction 4-(trimethylamino)butanal + NAD(+) + H2O = 4-(trimethylamino)butanoate + NADH + 2 H(+). It catalyses the reaction an aldehyde + NAD(+) + H2O = a carboxylate + NADH + 2 H(+). The catalysed reaction is 4-aminobutanal + NAD(+) + H2O = 4-aminobutanoate + NADH + 2 H(+). The enzyme catalyses formaldehyde + NAD(+) + H2O = formate + NADH + 2 H(+). It carries out the reaction acetaldehyde + NAD(+) + H2O = acetate + NADH + 2 H(+). It catalyses the reaction imidazole-4-acetaldehyde + NAD(+) + H2O = imidazole-4-acetate + NADH + 2 H(+). The catalysed reaction is acrolein + NAD(+) + H2O = acrylate + NADH + 2 H(+). The enzyme catalyses (5-hydroxyindol-3-yl)acetaldehyde + NAD(+) + H2O = (5-hydroxyindol-3-yl)acetate + NADH + 2 H(+). It carries out the reaction 3,4-dihydroxyphenylacetaldehyde + NAD(+) + H2O = 3,4-dihydroxyphenylacetate + NADH + 2 H(+). It catalyses the reaction spermine monoaldehyde + NAD(+) + H2O = N-(2-carboxyethyl)spermidine + NADH + 2 H(+). The catalysed reaction is propanal + NAD(+) + H2O = propanoate + NADH + 2 H(+). The enzyme catalyses butanal + NAD(+) + H2O = butanoate + NADH + 2 H(+). It carries out the reaction pentanal + NAD(+) + H2O = pentanoate + NADH + 2 H(+). It catalyses the reaction hexanal + NAD(+) + H2O = hexanoate + NADH + 2 H(+). It functions in the pathway amine and polyamine biosynthesis; carnitine biosynthesis. Converts gamma-trimethylaminobutyraldehyde into gamma-butyrobetaine with high efficiency (in vitro). Can catalyze the irreversible oxidation of a broad range of aldehydes to the corresponding acids in an NAD-dependent reaction, but with low efficiency. Catalyzes the oxidation of aldehydes arising from biogenic amines and polyamines. This Mus musculus (Mouse) protein is 4-trimethylaminobutyraldehyde dehydrogenase.